Here is a 174-residue protein sequence, read N- to C-terminus: Co-chaperone protein HscB (174 aa).

The J domain maps to 2–74 (NYFALFDLPR…LNRAIYFLCL (73 aa)).

This sequence belongs to the HscB family. In terms of assembly, interacts with HscA and stimulates its ATPase activity. Interacts with IscU.

Its function is as follows. Co-chaperone involved in the maturation of iron-sulfur cluster-containing proteins. Seems to help targeting proteins to be folded toward HscA. This is Co-chaperone protein HscB from Buchnera aphidicola subsp. Acyrthosiphon pisum (strain 5A).